Consider the following 440-residue polypeptide: Gap junction alpha-8 protein (440 aa).

An intramembrane segment occupies 2 to 12; that stretch reads GDWSFLGNILE. The Cytoplasmic portion of the chain corresponds to 13–21; that stretch reads EVNEHSTVI. The helical transmembrane segment at 22-42 threads the bilayer; that stretch reads GRVWLTVLFIFRILILGTAAE. At 43-71 the chain is on the extracellular side; that stretch reads FVWGDEQSDFVCNTQQPGCENVCYDEAFP. Disulfide bonds link cysteine 54–cysteine 201, cysteine 61–cysteine 195, and cysteine 65–cysteine 190. Residues 72 to 92 traverse the membrane as a helical segment; it reads ISHIRLWVLQIIFVSTPSLVY. Over 93-161 the chain is Cytoplasmic; the sequence is VGHAVHHVRM…GTLLRTYVCH (69 aa). A disordered region spans residues 108 to 144; the sequence is EREAEELSQQSPGNGGERAPLAADQGSVKKSSSSSKG. Residues 162–182 traverse the membrane as a helical segment; the sequence is IIFKTLFEVGFIVGHYFLYGF. Residues 183–210 lie on the Extracellular side of the membrane; sequence RILPLYRCSRWPCPNVVDCFVSRPTEKT. The chain crosses the membrane as a helical span at residues 211–231; sequence IFILFMLSVASVSLFLNILEM. Over 232 to 440 the chain is Cytoplasmic; that stretch reads SHLGLKKIRS…SRARSDDLTV (209 aa). Positions 334–440 are disordered; that stretch reads GAQEGVEEEQ…SRARSDDLTV (107 aa). Basic and acidic residues-rich tracts occupy residues 353-365 and 375-405; these read VGDK…RVST and EEEK…ELTP. Positions 423 to 432 are enriched in low complexity; sequence LSRLSKASSR.

It belongs to the connexin family. Alpha-type (group II) subfamily. A hemichannel or connexon is composed of a hexamer of connexins. A functional gap junction is formed by the apposition of two hemichannels. Forms heteromeric channels with GJA3. In terms of tissue distribution, detected in eye lens (at protein level). Eye lens.

The protein resides in the cell membrane. It localises to the cell junction. It is found in the gap junction. Its function is as follows. Structural component of eye lens gap junctions. Gap junctions are dodecameric channels that connect the cytoplasm of adjoining cells. They are formed by the docking of two hexameric hemichannels, one from each cell membrane. Small molecules and ions diffuse from one cell to a neighboring cell via the central pore. The sequence is that of Gap junction alpha-8 protein (GJA8) from Ovis aries (Sheep).